We begin with the raw amino-acid sequence, 405 residues long: Serine/threonine-protein kinase 2 (405 aa).

In terms of domain architecture, Protein kinase spans 54-405 (NDDFYHISTG…IFSDWINGGN (352 aa)). Residues 60–68 (ISTGGYGIV) and Lys-84 contribute to the ATP site. Asp-274 acts as the Proton acceptor in catalysis.

Belongs to the protein kinase superfamily. Ser/Thr protein kinase family. Poxviruses subfamily. Post-translationally, phosphorylated in vivo. Autophosphorylated in vitro.

It localises to the host endoplasmic reticulum. It is found in the host endoplasmic reticulum-Golgi intermediate compartment. It carries out the reaction L-seryl-[protein] + ATP = O-phospho-L-seryl-[protein] + ADP + H(+). The catalysed reaction is L-threonyl-[protein] + ATP = O-phospho-L-threonyl-[protein] + ADP + H(+). Essential serine-protein kinase involved in the early stage of virion morphogenesis. The polypeptide is Serine/threonine-protein kinase 2 (OPG054) (Vaccinia virus (strain L-IVP) (VACV)).